We begin with the raw amino-acid sequence, 367 residues long: Glutamate 5-kinase (367 aa).

Residue Lys9 participates in ATP binding. Positions 49, 136, and 148 each coordinate substrate. Residues 168 to 169 and 210 to 216 each bind ATP; these read TD and TGGMKSK. A PUA domain is found at 276–350; the sequence is SGQIEVDAGA…GMQSQDIQVR (75 aa).

The protein belongs to the glutamate 5-kinase family.

It localises to the cytoplasm. It catalyses the reaction L-glutamate + ATP = L-glutamyl 5-phosphate + ADP. Its pathway is amino-acid biosynthesis; L-proline biosynthesis; L-glutamate 5-semialdehyde from L-glutamate: step 1/2. Its function is as follows. Catalyzes the transfer of a phosphate group to glutamate to form L-glutamate 5-phosphate. This is Glutamate 5-kinase from Bacillus cereus (strain B4264).